Consider the following 156-residue polypeptide: Small ribosomal subunit protein uS7 (156 aa).

This sequence belongs to the universal ribosomal protein uS7 family. Part of the 30S ribosomal subunit. Contacts proteins S9 and S11.

One of the primary rRNA binding proteins, it binds directly to 16S rRNA where it nucleates assembly of the head domain of the 30S subunit. Is located at the subunit interface close to the decoding center, probably blocks exit of the E-site tRNA. The protein is Small ribosomal subunit protein uS7 of Buchnera aphidicola subsp. Acyrthosiphon pisum (strain Tuc7).